A 23-amino-acid polypeptide reads, in one-letter code: U3-ctenitoxin-Co1a (23 aa).

2 cysteine pairs are disulfide-bonded: C2–C17 and C9–C22.

As to expression, expressed by the venom gland.

It is found in the secreted. In terms of biological role, antagonist of L-type calcium channels (Cav1/CACNA1). The protein is U3-ctenitoxin-Co1a of Ctenus ornatus (Brazilian spider).